The following is a 594-amino-acid chain: Insulin-like growth factor 2 mRNA-binding protein 3-A (594 aa).

RRM domains follow at residues 2–75 (NKLY…HSVP) and 81–156 (RKLQ…YIPD). The segment covering 161–177 (PQAPSQQLQQQPQQQHP) has biased composition (low complexity). Positions 161 to 206 (PQAPSQQLQQQPQQQHPQGRRGFGQRGPARQGSPGAAARPKPQTEV) are disordered. KH domains are found at residues 205–270 (EVPL…CKII) and 286–353 (EIPL…EEEI). Residues 392–415 (GMPPPSVGVPSPTSSTSYPPFGQQ) form a disordered region. The span at 399–411 (GVPSPTSSTSYPP) shows a compositional bias: low complexity. KH domains are found at residues 418–483 (SETV…QGRI) and 500–566 (KLET…QRKI).

It belongs to the RRM IMP/VICKZ family. In terms of assembly, homodimer and multimer. Associates with microtubules. Interaction with a translocation machinery protein TRAPA of the endoplasmic reticulum. Component of a mRNP complex, at least composed of DAZAP1, IGF2BP3, STAU and VgRBP60. The mRNP complex with DAZAP1, IGF2BP3, STAU and VgRBP60 is only found in the cytoplasm. Interacts with a hnRNP 1 related RNA transport protein VgRBP60 both in the nucleus (in a RNA-independent manner) and the cytoplasm (in a RNA-dependent manner). Found in a B3 activator complex.

Its subcellular location is the nucleus. The protein localises to the cytoplasm. It is found in the endoplasmic reticulum. RNA-binding protein that acts as a regulator of mRNA transport and localization. Binds to the RNA sequence motif 5'-UUCAC-3'. Preferentially binds to N6-methyladenosine (m6A)-containing mRNAs and increases their stability. Mediates the specific association of Vg1 RNA to microtubules. Binds specifically to the vegetal localization elements (VLE or VgLE) in the 3'-UTR of Vg1 and VegT mRNAs. Binds to the Vg1 and VegT mRNAs in both the nucleus and the cytoplasm. May regulate mRNA translation. Acts as a transcription regulator. Binds to the 5'-[TA]GGTTACT-3' motif within element 3 of the TFIIIA gene promoter. The sequence is that of Insulin-like growth factor 2 mRNA-binding protein 3-A (igf2bp3-a) from Xenopus laevis (African clawed frog).